A 63-amino-acid polypeptide reads, in one-letter code: FKNPECGEPHSLDGSPNGISCRGYFPSWSYNPDAQQCVSFVYGGCGGNNNRFGSQNECEERCI.

The BPTI/Kunitz inhibitor domain occupies 6 to 62; the sequence is CGEPHSLDGSPNGISCRGYFPSWSYNPDAQQCVSFVYGGCGGNNNRFGSQNECEERC. 3 disulfide bridges follow: Cys-6-Cys-62, Cys-21-Cys-45, and Cys-37-Cys-58.

Functionally, serine protease inhibitor. This peptide can inhibit, in-vivo, acrosin and, to a lower level, plasma kallikrein. It probably plays a role in Drosophila reproduction. The protein is Male accessory gland serine protease inhibitor (PapD) of Drosophila funebris (Fruit fly).